We begin with the raw amino-acid sequence, 962 residues long: Putative RNA Helicase B962L (962 aa).

Residues 43 to 229 (IPTSLADRVL…FGIGKENIIL (187 aa)) enclose the Helicase ATP-binding domain. Position 56-63 (56-63 (SRTGSGKS)) interacts with ATP. Positions 167–170 (DEAH) match the DEAH box motif. Residues 253–459 (ACETALTIHK…TIKKNKEGVF (207 aa)) enclose the Helicase C-terminal domain. Residues 521–541 (GYFWQAAISDIATILAVVSVA) traverse the membrane as a helical segment.

Belongs to the DEAD box helicase family. DEAH subfamily.

It is found in the host membrane. The protein localises to the virion. The enzyme catalyses ATP + H2O = ADP + phosphate + H(+). This African swine fever virus (isolate Tick/South Africa/Pretoriuskop Pr4/1996) (ASFV) protein is Putative RNA Helicase B962L.